The primary structure comprises 372 residues: NAD(P)H-quinone oxidoreductase subunit 1 (372 aa).

A run of 8 helical transmembrane segments spans residues 31–51 (PLPMLIMLLAATVSVLVVVWL), 65–85 (PEFIGPLGVLAPLADGLKLVL), 97–117 (LLFTLGPAIVVIPVFLSYLIL), 128–148 (VGLGIFLWIALSSVVPIGLLM), 176–196 (LALSVLAVVMMSNSLSTVDIV), 254–276 (FALFYLGSYVNLTLSALLFAVLY), 304–324 (LIFATIGIGMTLLKAYFLIFL), and 347–367 (FLLPVSLVNLLITAGLKLAFP).

Belongs to the complex I subunit 1 family. As to quaternary structure, NDH-1 is composed of at least 11 different subunits.

Its subcellular location is the cellular thylakoid membrane. The enzyme catalyses a plastoquinone + NADH + (n+1) H(+)(in) = a plastoquinol + NAD(+) + n H(+)(out). The catalysed reaction is a plastoquinone + NADPH + (n+1) H(+)(in) = a plastoquinol + NADP(+) + n H(+)(out). Its function is as follows. NDH-1 shuttles electrons from an unknown electron donor, via FMN and iron-sulfur (Fe-S) centers, to quinones in the respiratory and/or the photosynthetic chain. The immediate electron acceptor for the enzyme in this species is believed to be plastoquinone. Couples the redox reaction to proton translocation, and thus conserves the redox energy in a proton gradient. The protein is NAD(P)H-quinone oxidoreductase subunit 1 of Leptolyngbya boryana (Plectonema boryanum).